We begin with the raw amino-acid sequence, 278 residues long: Fasciclin-like arabinogalactan protein 5 (278 aa).

An N-terminal signal peptide occupies residues 1–24 (MGLKASLSLLSLTILLVFSKVVTA). Positions 25 to 169 (NNITLAFQKY…LSIIQITMPI (145 aa)) constitute an FAS1 domain. N-linked (GlcNAc...) asparagine glycosylation is found at N26, N74, N126, and N159. Positions 199-257 (VVPAPGPAADDNSPDSAVPKTPPAPATDTPEADSPAPAPSADNEKIEAADKAKPSSSAS) are disordered. Residues 224–239 (ATDTPEADSPAPAPSA) show a composition bias toward low complexity. Residues 240 to 251 (DNEKIEAADKAK) are compositionally biased toward basic and acidic residues. S255 carries GPI-anchor amidated serine lipidation. Positions 256–278 (ASKAGWSFDVILLLAFLASFAGF) are cleaved as a propeptide — removed in mature form.

This sequence belongs to the fasciclin-like AGP family.

Its subcellular location is the cell membrane. In terms of biological role, may be a cell surface adhesion protein. This chain is Fasciclin-like arabinogalactan protein 5 (FLA5), found in Arabidopsis thaliana (Mouse-ear cress).